Consider the following 333-residue polypeptide: Taste receptor type 2 member 123 (333 aa).

The Extracellular segment spans residues 1–13; that stretch reads MFSQKINYSHLFT. Residue Asn-7 is glycosylated (N-linked (GlcNAc...) asparagine). Residues 14–34 traverse the membrane as a helical segment; the sequence is FSITLYVEIVTGILGHGFIAL. At 35–60 the chain is on the cytoplasmic side; it reads VNIMDWVKRRRISSVDQILTALALTR. Residues 61–81 form a helical membrane-spanning segment; the sequence is FIYVLSMLICILLFMLCPHLP. Residues 82–90 lie on the Extracellular side of the membrane; sequence RRSEMLSAM. Residues 91 to 111 traverse the membrane as a helical segment; that stretch reads GIFWVVNSHFSIWLTTCLGVF. Topologically, residues 112 to 134 are cytoplasmic; sequence YFLKIANFSNSFFLYLKWRVKKV. Residues 135–155 form a helical membrane-spanning segment; the sequence is ILIIILASLIFLTLHILSLGI. At 156–205 the chain is on the extracellular side; sequence YDQFSIAAYVGNMSYSLTDLTQFSSTFLFSNSSNVFLITNSSHVFLPINS. N-linked (GlcNAc...) asparagine glycans are attached at residues Asn-167, Asn-186, and Asn-195. The helical transmembrane segment at 206–226 threads the bilayer; sequence LFMLIPFTVSLVAFLMLIFSL. Topologically, residues 227 to 253 are cytoplasmic; the sequence is WKHHKKMQVNAKQPRDVSTMAHIKALQ. Residues 254–274 traverse the membrane as a helical segment; that stretch reads TVFSFLLLYAIYLLFLIIGIL. The Extracellular segment spans residues 275–281; the sequence is NLGLMEK. A helical transmembrane segment spans residues 282-302; sequence IVILIFDHISGAVFPISHSFV. The Cytoplasmic segment spans residues 303 to 333; the sequence is LILGNSKLRQASLSVLPCLRCQSKDMDTMGL.

Belongs to the G-protein coupled receptor T2R family. As to expression, expressed in subsets of taste receptor cells of the tongue and palate epithelium and exclusively in gustducin-positive cells. Expressed in the duodenum, antrum and fundus (part of the stomach).

It is found in the membrane. Functionally, gustducin-coupled receptor implicated in the perception of bitter compounds in the oral cavity and the gastrointestinal tract. Signals through PLCB2 and the calcium-regulated cation channel TRPM5. The sequence is that of Taste receptor type 2 member 123 (Tas2r123) from Mus musculus (Mouse).